The sequence spans 515 residues: Zinc metalloproteinase-disintegrin-like EoMP06 (515 aa).

Residues 1 to 94 constitute a propeptide that is removed on maturation; sequence VEDHCYYHGR…TLGLIVPPHG (94 aa). Glutamine 95 carries the pyrrolidone carboxylic acid modification. The Peptidase M12B domain maps to 100–296; it reads KFIELIIVVD…YNPKCIVDPP (197 aa). Glutamate 103 is a binding site for Ca(2+). Residue asparagine 160 is glycosylated (N-linked (GlcNAc...) asparagine). Aspartate 187 is a Ca(2+) binding site. 2 N-linked (GlcNAc...) asparagine glycosylation sites follow: asparagine 194 and asparagine 225. Cystine bridges form between cysteine 211/cysteine 291, cysteine 251/cysteine 275, and cysteine 253/cysteine 258. Histidine 236 serves as a coordination point for Zn(2+). The active site involves glutamate 237. Positions 240 and 246 each coordinate Zn(2+). Ca(2+) contacts are provided by cysteine 291, valine 306, asparagine 309, valine 311, glutamate 313, glutamate 316, and aspartate 319. Positions 304–390 constitute a Disintegrin domain; it reads PAVCGNGVWE…ECPRNEFQRN (87 aa). 14 cysteine pairs are disulfide-bonded: cysteine 307–cysteine 336, cysteine 318–cysteine 331, cysteine 320–cysteine 326, cysteine 330–cysteine 353, cysteine 344–cysteine 350, cysteine 349–cysteine 375, cysteine 362–cysteine 382, cysteine 369–cysteine 401, cysteine 394–cysteine 406, cysteine 413–cysteine 466, cysteine 428–cysteine 477, cysteine 441–cysteine 454, cysteine 461–cysteine 503, and cysteine 497–cysteine 508. A D/ECD-tripeptide motif is present at residues 368–370; the sequence is DCD. Ca(2+) contacts are provided by aspartate 370, valine 371, and asparagine 385.

Belongs to the venom metalloproteinase (M12B) family. P-III subfamily. P-IIIa sub-subfamily. In terms of assembly, monomer. Requires Zn(2+) as cofactor. Expressed by the venom gland.

It localises to the secreted. In terms of biological role, snake venom zinc metalloproteinase that catalyzes the conversion of prothrombin (F2) to alpha-thrombin through formation of a thrombin intermediate, thereby functioning as a procoagulant protein. The chain is Zinc metalloproteinase-disintegrin-like EoMP06 from Echis ocellatus (Ocellated saw-scaled viper).